The primary structure comprises 282 residues: Hydroxyethylthiazole kinase 2 (282 aa).

Met-44 is a binding site for substrate. Residues Arg-120 and Ser-179 each contribute to the ATP site. Position 206 (Gly-206) interacts with substrate.

Belongs to the Thz kinase family. Mg(2+) is required as a cofactor.

The enzyme catalyses 5-(2-hydroxyethyl)-4-methylthiazole + ATP = 4-methyl-5-(2-phosphooxyethyl)-thiazole + ADP + H(+). It participates in cofactor biosynthesis; thiamine diphosphate biosynthesis; 4-methyl-5-(2-phosphoethyl)-thiazole from 5-(2-hydroxyethyl)-4-methylthiazole: step 1/1. Functionally, catalyzes the phosphorylation of the hydroxyl group of 4-methyl-5-beta-hydroxyethylthiazole (THZ). The sequence is that of Hydroxyethylthiazole kinase 2 from Methanosphaera stadtmanae (strain ATCC 43021 / DSM 3091 / JCM 11832 / MCB-3).